The chain runs to 375 residues: 3-dehydroquinate synthase (375 aa).

Residues Ser-82–Lys-87, Gly-116–Asp-120, Thr-140–Thr-141, Lys-153, and Lys-162 each bind NAD(+). The Zn(2+) site is built by Glu-195, His-259, and His-276.

Belongs to the sugar phosphate cyclases superfamily. Dehydroquinate synthase family. Requires NAD(+) as cofactor. The cofactor is Co(2+). Zn(2+) is required as a cofactor.

It localises to the cytoplasm. It catalyses the reaction 7-phospho-2-dehydro-3-deoxy-D-arabino-heptonate = 3-dehydroquinate + phosphate. Its pathway is metabolic intermediate biosynthesis; chorismate biosynthesis; chorismate from D-erythrose 4-phosphate and phosphoenolpyruvate: step 2/7. Catalyzes the conversion of 3-deoxy-D-arabino-heptulosonate 7-phosphate (DAHP) to dehydroquinate (DHQ). The sequence is that of 3-dehydroquinate synthase from Rhodopirellula baltica (strain DSM 10527 / NCIMB 13988 / SH1).